The chain runs to 145 residues: Deoxyuridine 5'-triphosphate nucleotidohydrolase (145 aa).

Residues 63-65, asparagine 76, 80-82, and lysine 90 contribute to the substrate site; these read RSG and TID.

This sequence belongs to the dUTPase family. Mg(2+) serves as cofactor.

It catalyses the reaction dUTP + H2O = dUMP + diphosphate + H(+). It participates in pyrimidine metabolism; dUMP biosynthesis; dUMP from dCTP (dUTP route): step 2/2. Its function is as follows. This enzyme is involved in nucleotide metabolism: it produces dUMP, the immediate precursor of thymidine nucleotides and it decreases the intracellular concentration of dUTP so that uracil cannot be incorporated into DNA. This is Deoxyuridine 5'-triphosphate nucleotidohydrolase from Clostridium acetobutylicum (strain ATCC 824 / DSM 792 / JCM 1419 / IAM 19013 / LMG 5710 / NBRC 13948 / NRRL B-527 / VKM B-1787 / 2291 / W).